Reading from the N-terminus, the 252-residue chain is Beta-crystallin B1 (252 aa).

2 stretches are compositionally biased toward low complexity: residues 1 to 15 (MSQA…TVAV) and 24 to 37 (KGAP…SPGT). The tract at residues 1–42 (MSQAAKASASATVAVNPGPDTKGKGAPPAGTSPSPGTTLAPT) is disordered. Ser2 is modified (N-acetylserine). An N-terminal arm region spans residues 2–58 (SQAAKASASATVAVNPGPDTKGKGAPPAGTSPSPGTTLAPTTVPITSAKAAELPPGN). Beta/gamma crystallin 'Greek key' domains follow at residues 59-98 (YRLV…IVSA) and 99-143 (GPWV…RPIK). The tract at residues 144–148 (MDAQE) is connecting peptide. Beta/gamma crystallin 'Greek key' domains are found at residues 149–190 (HKIS…KVSS) and 191–233 (GTWV…RRLR). The interval 235–252 (KQWHLEGSFPVLATEPPK) is C-terminal arm.

This sequence belongs to the beta/gamma-crystallin family. Homo/heterodimer, or complexes of higher-order. The structure of beta-crystallin oligomers seems to be stabilized through interactions between the N-terminal arms. Specific cleavages in the N-terminal arm occur during lens maturation and give rise to truncated forms, leading to impaired oligomerization and protein insolubilization.

In terms of biological role, crystallins are the dominant structural components of the vertebrate eye lens. The polypeptide is Beta-crystallin B1 (CRYBB1) (Homo sapiens (Human)).